A 1070-amino-acid chain; its full sequence is DNA-directed RNA polymerase subunit beta (1070 aa).

It belongs to the RNA polymerase beta chain family. In plastids the minimal PEP RNA polymerase catalytic core is composed of four subunits: alpha, beta, beta', and beta''. When a (nuclear-encoded) sigma factor is associated with the core the holoenzyme is formed, which can initiate transcription.

The protein resides in the plastid. Its subcellular location is the chloroplast. The catalysed reaction is RNA(n) + a ribonucleoside 5'-triphosphate = RNA(n+1) + diphosphate. Its function is as follows. DNA-dependent RNA polymerase catalyzes the transcription of DNA into RNA using the four ribonucleoside triphosphates as substrates. The chain is DNA-directed RNA polymerase subunit beta from Gossypium barbadense (Sea Island cotton).